Reading from the N-terminus, the 485-residue chain is Glutamate--tRNA ligase (485 aa).

Positions 11-21 (PSPTGYMHVGN) match the 'HIGH' region motif. Zn(2+)-binding residues include cysteine 108, cysteine 110, cysteine 135, and aspartate 137. The short motif at 252–256 (KLSKR) is the 'KMSKS' region element. Lysine 255 serves as a coordination point for ATP.

It belongs to the class-I aminoacyl-tRNA synthetase family. Glutamate--tRNA ligase type 1 subfamily. Monomer. Requires Zn(2+) as cofactor.

The protein resides in the cytoplasm. It carries out the reaction tRNA(Glu) + L-glutamate + ATP = L-glutamyl-tRNA(Glu) + AMP + diphosphate. Its function is as follows. Catalyzes the attachment of glutamate to tRNA(Glu) in a two-step reaction: glutamate is first activated by ATP to form Glu-AMP and then transferred to the acceptor end of tRNA(Glu). The polypeptide is Glutamate--tRNA ligase (Clostridium botulinum (strain Loch Maree / Type A3)).